We begin with the raw amino-acid sequence, 254 residues long: 14-3-3-like protein RA215 (254 aa).

The protein belongs to the 14-3-3 family.

The polypeptide is 14-3-3-like protein RA215 (Solanum tuberosum (Potato)).